Here is a 573-residue protein sequence, read N- to C-terminus: 2-succinyl-5-enolpyruvyl-6-hydroxy-3-cyclohexene-1-carboxylate synthase (573 aa).

This sequence belongs to the TPP enzyme family. MenD subfamily. Homodimer. Mg(2+) serves as cofactor. Requires Mn(2+) as cofactor. It depends on thiamine diphosphate as a cofactor.

The catalysed reaction is isochorismate + 2-oxoglutarate + H(+) = 5-enolpyruvoyl-6-hydroxy-2-succinyl-cyclohex-3-ene-1-carboxylate + CO2. It functions in the pathway quinol/quinone metabolism; 1,4-dihydroxy-2-naphthoate biosynthesis; 1,4-dihydroxy-2-naphthoate from chorismate: step 2/7. Its pathway is quinol/quinone metabolism; menaquinone biosynthesis. In terms of biological role, catalyzes the thiamine diphosphate-dependent decarboxylation of 2-oxoglutarate and the subsequent addition of the resulting succinic semialdehyde-thiamine pyrophosphate anion to isochorismate to yield 2-succinyl-5-enolpyruvyl-6-hydroxy-3-cyclohexene-1-carboxylate (SEPHCHC). This is 2-succinyl-5-enolpyruvyl-6-hydroxy-3-cyclohexene-1-carboxylate synthase from Shewanella oneidensis (strain ATCC 700550 / JCM 31522 / CIP 106686 / LMG 19005 / NCIMB 14063 / MR-1).